Reading from the N-terminus, the 277-residue chain is Thymidylate synthase (277 aa).

Arg21 contacts dUMP. His51 provides a ligand contact to (6R)-5,10-methylene-5,6,7,8-tetrahydrofolate. 126-127 (RR) is a dUMP binding site. The Nucleophile role is filled by Cys159. Residues 179 to 182 (RSSD), Asn190, and 220 to 222 (HAY) each bind dUMP. (6R)-5,10-methylene-5,6,7,8-tetrahydrofolate is bound at residue Asp182. Ala276 lines the (6R)-5,10-methylene-5,6,7,8-tetrahydrofolate pocket.

Belongs to the thymidylate synthase family. Bacterial-type ThyA subfamily. Homodimer.

The protein resides in the cytoplasm. The enzyme catalyses dUMP + (6R)-5,10-methylene-5,6,7,8-tetrahydrofolate = 7,8-dihydrofolate + dTMP. It participates in pyrimidine metabolism; dTTP biosynthesis. Its function is as follows. Catalyzes the reductive methylation of 2'-deoxyuridine-5'-monophosphate (dUMP) to 2'-deoxythymidine-5'-monophosphate (dTMP) while utilizing 5,10-methylenetetrahydrofolate (mTHF) as the methyl donor and reductant in the reaction, yielding dihydrofolate (DHF) as a by-product. This enzymatic reaction provides an intracellular de novo source of dTMP, an essential precursor for DNA biosynthesis. In Pseudomonas fluorescens (strain SBW25), this protein is Thymidylate synthase.